The chain runs to 400 residues: Large envelope protein (400 aa).

M1 is modified (N-acetylmethionine). Disordered regions lie at residues 1–24 (MGGW…PLGF) and 86–114 (TTVP…PLRD). The N-myristoyl glycine; by host moiety is linked to residue G2. The segment at 2 to 119 (GGWSSKPRKG…PPLRDTHPQA (118 aa)) is pre-S1. Residues 2–174 (GGWSSKPRKG…SSKTGDPVPN (173 aa)) are pre-S. At 2–181 (GGWSSKPRKG…VPNMENIASG (180 aa)) the chain is on the virion surface; in external conformation side. Over 2–253 (GGWSSKPRKG…PGYRWMCLRR (252 aa)) the chain is Intravirion; in internal conformation. W4 is a glycosylation site (N-linked (GlcNAc...) asparagine). Residues 96 to 106 (STNRQSGRQPT) are compositionally biased toward polar residues. The interval 120–174 (MQWNSTTFLQTLQDSRVRALYLPAGGSSSGTVSPAQNTVSAISSISSKTGDPVPN) is pre-S2. A helical transmembrane segment spans residues 182–202 (LLGHLLVLQAGFFSLTKILTI). The Intravirion; in external conformation portion of the chain corresponds to 203–253 (PQSLDSWWTSLNFLGGTPACPGQNSQSQISSHSPTCCPPICPGYRWMCLRR). Residues 254–274 (FIIFLCILLLCLIFLLVLLDY) form a helical membrane-spanning segment. At 275 to 348 (QGMLPVCPLT…WASVRFSWLS (74 aa)) the chain is on the virion surface side. An N-linked (GlcNAc...) asparagine; by host glycan is attached at N320. Residues 349-369 (LLVPFVQWFVGLSPTVWLSVI) traverse the membrane as a helical segment. Topologically, residues 370-375 (WMMWFW) are intravirion. A helical transmembrane segment spans residues 376–398 (GPSLYNILRPFMPLLPTFFCLWV). The Virion surface portion of the chain corresponds to 399 to 400 (YI).

The protein belongs to the orthohepadnavirus major surface antigen family. In terms of assembly, interacts (via its myristoylated pre-S1 region) with the host SLC10A1/NTCP; this interaction is essential for viral entry. In its internal form (Li-HBsAg), interacts with the capsid protein and with the isoform S. Interacts with host chaperone CANX. As to quaternary structure, associates with host chaperone CANX through its pre-S2 N glycan; this association may be essential for isoform M proper secretion. In terms of assembly, interacts with isoform L. Interacts with the antigens of satellite virus HDV (HDVAgs); this interaction is required for encapsidation of HDV genomic RNA. Post-translationally, isoform M is N-terminally acetylated by host at a ratio of 90%, and N-glycosylated by host at the pre-S2 region. In terms of processing, myristoylated; this modification is essential for its interaction with the host protein SLC10A1/NTCP.

It is found in the virion membrane. Functionally, the large envelope protein exists in two topological conformations, one which is termed 'external' or Le-HBsAg and the other 'internal' or Li-HBsAg. In its external conformation the protein attaches the virus to cell receptors and thereby initiating infection. This interaction determines the species specificity and liver tropism. This attachment induces virion internalization predominantly through caveolin-mediated endocytosis. The large envelope protein also assures fusion between virion membrane and endosomal membrane. In its internal conformation the protein plays a role in virion morphogenesis and mediates the contact with the nucleocapsid like a matrix protein. Its function is as follows. The middle envelope protein plays an important role in the budding of the virion. It is involved in the induction of budding in a nucleocapsid independent way. In this process the majority of envelope proteins bud to form subviral lipoprotein particles of 22 nm of diameter that do not contain a nucleocapsid. This Hepatitis B virus genotype B2 subtype adw (isolate China/patient4/1996) (HBV-B) protein is Large envelope protein.